The following is a 171-amino-acid chain: Crossover junction endodeoxyribonuclease RuvC (171 aa).

Active-site residues include D7, E74, and D147. The Mg(2+) site is built by D7, E74, and D147.

The protein belongs to the RuvC family. As to quaternary structure, homodimer which binds Holliday junction (HJ) DNA. The HJ becomes 2-fold symmetrical on binding to RuvC with unstacked arms; it has a different conformation from HJ DNA in complex with RuvA. In the full resolvosome a probable DNA-RuvA(4)-RuvB(12)-RuvC(2) complex forms which resolves the HJ. Requires Mg(2+) as cofactor.

It localises to the cytoplasm. The catalysed reaction is Endonucleolytic cleavage at a junction such as a reciprocal single-stranded crossover between two homologous DNA duplexes (Holliday junction).. In terms of biological role, the RuvA-RuvB-RuvC complex processes Holliday junction (HJ) DNA during genetic recombination and DNA repair. Endonuclease that resolves HJ intermediates. Cleaves cruciform DNA by making single-stranded nicks across the HJ at symmetrical positions within the homologous arms, yielding a 5'-phosphate and a 3'-hydroxyl group; requires a central core of homology in the junction. The consensus cleavage sequence is 5'-(A/T)TT(C/G)-3'. Cleavage occurs on the 3'-side of the TT dinucleotide at the point of strand exchange. HJ branch migration catalyzed by RuvA-RuvB allows RuvC to scan DNA until it finds its consensus sequence, where it cleaves and resolves the cruciform DNA. This chain is Crossover junction endodeoxyribonuclease RuvC, found in Acidobacterium capsulatum (strain ATCC 51196 / DSM 11244 / BCRC 80197 / JCM 7670 / NBRC 15755 / NCIMB 13165 / 161).